The chain runs to 197 residues: 3-isopropylmalate dehydratase small subunit (197 aa).

Belongs to the LeuD family. LeuD type 1 subfamily. In terms of assembly, heterodimer of LeuC and LeuD.

The catalysed reaction is (2R,3S)-3-isopropylmalate = (2S)-2-isopropylmalate. Its pathway is amino-acid biosynthesis; L-leucine biosynthesis; L-leucine from 3-methyl-2-oxobutanoate: step 2/4. Its function is as follows. Catalyzes the isomerization between 2-isopropylmalate and 3-isopropylmalate, via the formation of 2-isopropylmaleate. This Streptococcus suis (strain 98HAH33) protein is 3-isopropylmalate dehydratase small subunit.